Reading from the N-terminus, the 78-residue chain is Small ribosomal subunit protein bS18 (78 aa).

The protein belongs to the bacterial ribosomal protein bS18 family. Part of the 30S ribosomal subunit. Forms a tight heterodimer with protein bS6.

Its function is as follows. Binds as a heterodimer with protein bS6 to the central domain of the 16S rRNA, where it helps stabilize the platform of the 30S subunit. The chain is Small ribosomal subunit protein bS18 from Kineococcus radiotolerans (strain ATCC BAA-149 / DSM 14245 / SRS30216).